Here is a 221-residue protein sequence, read N- to C-terminus: Endonuclease V (221 aa).

Asp-44 and Asp-112 together coordinate Mg(2+).

The protein belongs to the endonuclease V family. It depends on Mg(2+) as a cofactor.

The protein localises to the cytoplasm. It carries out the reaction Endonucleolytic cleavage at apurinic or apyrimidinic sites to products with a 5'-phosphate.. Functionally, DNA repair enzyme involved in the repair of deaminated bases. Selectively cleaves double-stranded DNA at the second phosphodiester bond 3' to a deoxyinosine leaving behind the intact lesion on the nicked DNA. The polypeptide is Endonuclease V (Trichormus variabilis (strain ATCC 29413 / PCC 7937) (Anabaena variabilis)).